A 289-amino-acid chain; its full sequence is ATP phosphoribosyltransferase (289 aa).

Belongs to the ATP phosphoribosyltransferase family. Long subfamily. The cofactor is Mg(2+).

The protein localises to the cytoplasm. It catalyses the reaction 1-(5-phospho-beta-D-ribosyl)-ATP + diphosphate = 5-phospho-alpha-D-ribose 1-diphosphate + ATP. The protein operates within amino-acid biosynthesis; L-histidine biosynthesis; L-histidine from 5-phospho-alpha-D-ribose 1-diphosphate: step 1/9. Feedback inhibited by histidine. Its function is as follows. Catalyzes the condensation of ATP and 5-phosphoribose 1-diphosphate to form N'-(5'-phosphoribosyl)-ATP (PR-ATP). Has a crucial role in the pathway because the rate of histidine biosynthesis seems to be controlled primarily by regulation of HisG enzymatic activity. The protein is ATP phosphoribosyltransferase of Methanosarcina acetivorans (strain ATCC 35395 / DSM 2834 / JCM 12185 / C2A).